Here is a 448-residue protein sequence, read N- to C-terminus: tRNA(Ile)-lysidine synthase (448 aa).

An ATP-binding site is contributed by serine 25–serine 30.

This sequence belongs to the tRNA(Ile)-lysidine synthase family.

It localises to the cytoplasm. It carries out the reaction cytidine(34) in tRNA(Ile2) + L-lysine + ATP = lysidine(34) in tRNA(Ile2) + AMP + diphosphate + H(+). Ligates lysine onto the cytidine present at position 34 of the AUA codon-specific tRNA(Ile) that contains the anticodon CAU, in an ATP-dependent manner. Cytidine is converted to lysidine, thus changing the amino acid specificity of the tRNA from methionine to isoleucine. The sequence is that of tRNA(Ile)-lysidine synthase from Brucella abortus (strain S19).